Consider the following 277-residue polypeptide: E3 ubiquitin-protein ligase CCNB1IP1 (277 aa).

The segment at Cys4–Cys51 adopts an RING-type; atypical zinc-finger fold. The stretch at Gln127 to Arg182 forms a coiled coil.

In terms of assembly, interacts with CCNB1, UBE2L3 and NF2. Ubiquitinated; autoubiquitinated. In terms of processing, phosphorylated by CDK1 on serine or threonine residues (in vitro). As to expression, highly expressed in heart. Detected at intermediate levels in liver and kidney, and at low levels in placenta, brain and lung.

Its subcellular location is the nucleus. It localises to the chromosome. The catalysed reaction is S-ubiquitinyl-[E2 ubiquitin-conjugating enzyme]-L-cysteine + [acceptor protein]-L-lysine = [E2 ubiquitin-conjugating enzyme]-L-cysteine + N(6)-ubiquitinyl-[acceptor protein]-L-lysine.. It functions in the pathway protein modification; protein ubiquitination. In terms of biological role, ubiquitin E3 ligase that acts as a limiting factor for crossing-over during meiosis: required during zygonema to limit the colocalization of RNF212 with MutS-gamma-associated recombination sites and thereby establish early differentiation of crossover and non-crossover sites. Later, it is directed by MutL-gamma to stably accumulate at designated crossover sites. Probably promotes the dissociation of RNF212 and MutS-gamma to allow the progression of recombination and the implementation of the final steps of crossing over. Modulates cyclin-B levels and participates in the regulation of cell cycle progression through the G2 phase. Overexpression causes delayed entry into mitosis. This Homo sapiens (Human) protein is E3 ubiquitin-protein ligase CCNB1IP1 (CCNB1IP1).